Reading from the N-terminus, the 428-residue chain is C4-dicarboxylate transport protein (428 aa).

8 helical membrane-spanning segments follow: residues 8–28 (SLYF…HFYP), 44–64 (LIKM…IAGM), 76–96 (VALL…LIIV), 142–162 (IGAF…LFGF), 184–204 (VIFG…FGAM), 222–242 (LIIC…GSIA), 326–346 (IVHQ…AAGV), and 352–372 (IVLA…LALI).

Belongs to the dicarboxylate/amino acid:cation symporter (DAACS) (TC 2.A.23) family.

Its subcellular location is the cell inner membrane. Responsible for the transport of dicarboxylates such as succinate, fumarate, and malate from the periplasm across the membrane. This is C4-dicarboxylate transport protein from Escherichia coli O127:H6 (strain E2348/69 / EPEC).